A 103-amino-acid chain; its full sequence is Nucleoid-associated protein A2cp1_3777 (103 aa).

It belongs to the YbaB/EbfC family. Homodimer.

The protein resides in the cytoplasm. The protein localises to the nucleoid. Binds to DNA and alters its conformation. May be involved in regulation of gene expression, nucleoid organization and DNA protection. The polypeptide is Nucleoid-associated protein A2cp1_3777 (Anaeromyxobacter dehalogenans (strain 2CP-1 / ATCC BAA-258)).